Here is a 728-residue protein sequence, read N- to C-terminus: 1,4-alpha-glucan branching enzyme GlgB (728 aa).

The active-site Nucleophile is Asp405. Residue Glu458 is the Proton donor of the active site.

It belongs to the glycosyl hydrolase 13 family. GlgB subfamily. In terms of assembly, monomer.

The catalysed reaction is Transfers a segment of a (1-&gt;4)-alpha-D-glucan chain to a primary hydroxy group in a similar glucan chain.. The protein operates within glycan biosynthesis; glycogen biosynthesis. Functionally, catalyzes the formation of the alpha-1,6-glucosidic linkages in glycogen by scission of a 1,4-alpha-linked oligosaccharide from growing alpha-1,4-glucan chains and the subsequent attachment of the oligosaccharide to the alpha-1,6 position. The chain is 1,4-alpha-glucan branching enzyme GlgB from Salmonella paratyphi A (strain ATCC 9150 / SARB42).